The following is a 491-amino-acid chain: Protein nucleotidyltransferase YdiU (491 aa).

ATP contacts are provided by glycine 94, glycine 96, arginine 97, lysine 117, aspartate 129, glycine 130, arginine 180, and arginine 187. Aspartate 256 (proton acceptor) is an active-site residue. Positions 257 and 266 each coordinate Mg(2+). ATP is bound at residue aspartate 266.

Belongs to the SELO family. It depends on Mg(2+) as a cofactor. The cofactor is Mn(2+).

It carries out the reaction L-seryl-[protein] + ATP = 3-O-(5'-adenylyl)-L-seryl-[protein] + diphosphate. The enzyme catalyses L-threonyl-[protein] + ATP = 3-O-(5'-adenylyl)-L-threonyl-[protein] + diphosphate. The catalysed reaction is L-tyrosyl-[protein] + ATP = O-(5'-adenylyl)-L-tyrosyl-[protein] + diphosphate. It catalyses the reaction L-histidyl-[protein] + UTP = N(tele)-(5'-uridylyl)-L-histidyl-[protein] + diphosphate. It carries out the reaction L-seryl-[protein] + UTP = O-(5'-uridylyl)-L-seryl-[protein] + diphosphate. The enzyme catalyses L-tyrosyl-[protein] + UTP = O-(5'-uridylyl)-L-tyrosyl-[protein] + diphosphate. Its function is as follows. Nucleotidyltransferase involved in the post-translational modification of proteins. It can catalyze the addition of adenosine monophosphate (AMP) or uridine monophosphate (UMP) to a protein, resulting in modifications known as AMPylation and UMPylation. The polypeptide is Protein nucleotidyltransferase YdiU (Bacillus cytotoxicus (strain DSM 22905 / CIP 110041 / 391-98 / NVH 391-98)).